Consider the following 669-residue polypeptide: MGKIKELQTSLANKIAAGEVVERPSSVVKELLENAIDAGATEISIEVEESGVQSIRVVDNGSGIEAEDLGLVFHRHATSKLDQDEDLFHIRTLGFRGEALASISSVAKVTLKTCTDNANGNEIYVENGEILNHKPAKAKKGTDILVESLFYNTPARLKYIKSLYTELGKITDIVNRMAMSHPDIRIALISDGKTMLSTNGSGRTNEVMAEIYGMKVARDLVHISGDTSDYHIEGFVAKPEHSRSNKHYISIFINGRYIKNFMLNKAILEGYHTLLTIGRFPICYINIEMDPILVDVNVHPTKLEVRLSKEEQLYQLIVSKIQEAFKDRILIPKNNLDYVPKKNKVLHSFEQQKIEFEQRQNTENKQEKTFSSEESNSKPFMAENQNDEIVIKEDSYNPFVTKTSESLIADDESSGYNNTREKDEDYFKKQQEILQEMDQTFDSNDDTSVQNYENKASDDYYDVNDIKGTKSKDPKRRIPYMEIVGQVHGTYIIAQNEFGMYMIDQHAAQERIKYEYFRDKIGEVTNEIQDLLIPLTFHFSKDEQLVIDQYKNELQQVGIMLEHFGGHDYIVSSYPVWFPKDEVEEIIKDMIELILEEKKVDIKKLREDVAIMMSCKKSIKANHYLQKHEMSDLIDQLREAEDPFTCPHGRPIIINFSKYELEKLFKRVM.

Positions 356 to 371 (FEQRQNTENKQEKTFS) are enriched in basic and acidic residues. Positions 356 to 379 (FEQRQNTENKQEKTFSSEESNSKP) are disordered.

This sequence belongs to the DNA mismatch repair MutL/HexB family.

Its function is as follows. This protein is involved in the repair of mismatches in DNA. It is required for dam-dependent methyl-directed DNA mismatch repair. May act as a 'molecular matchmaker', a protein that promotes the formation of a stable complex between two or more DNA-binding proteins in an ATP-dependent manner without itself being part of a final effector complex. The sequence is that of DNA mismatch repair protein MutL from Staphylococcus aureus (strain MRSA252).